We begin with the raw amino-acid sequence, 339 residues long: MRVYYDRDADIGLIKTKKVAIVGYGSQGHAHAQNLQDSGVADVAIALRPGSATAKKAEGAGFKVLSNADAAKWADIVMILAPDEHQAAIYNDDLRDNLKPGAALAFAHGLNVHFGLIEPRADIDVFMIAPKGPGHTVRSEYQRGGGVPCLIAIAQDASGNAHDVALSYASAIGGGRSGVIETTFKEECETDLFGEQAVLCGGLSHLIMAGFETLVEAGYAPEMAYFECLHEVKLIVDLMYEGGIANMRYSISNTAEYGDIHTGPRVITSETKAEMKRVLDDIQKGKFVKRFVLDNRAGQPELKASRKLVAEHPIEKVGAELRAMMPWISKNQLVDKAKN.

Residues 1-182 form the KARI N-terminal Rossmann domain; sequence MRVYYDRDAD…GGGRSGVIET (182 aa). Residues 24–27, Arg-48, Ser-51, Thr-53, and 83–86 contribute to the NADP(+) site; these read YGSQ and DEHQ. His-108 is an active-site residue. Gly-134 provides a ligand contact to NADP(+). Residues 183 to 328 form the KARI C-terminal knotted domain; that stretch reads TFKEECETDL…AELRAMMPWI (146 aa). Mg(2+) is bound by residues Asp-191, Glu-195, Glu-227, and Glu-231. Ser-252 lines the substrate pocket.

Belongs to the ketol-acid reductoisomerase family. The cofactor is Mg(2+).

It catalyses the reaction (2R)-2,3-dihydroxy-3-methylbutanoate + NADP(+) = (2S)-2-acetolactate + NADPH + H(+). The enzyme catalyses (2R,3R)-2,3-dihydroxy-3-methylpentanoate + NADP(+) = (S)-2-ethyl-2-hydroxy-3-oxobutanoate + NADPH + H(+). It functions in the pathway amino-acid biosynthesis; L-isoleucine biosynthesis; L-isoleucine from 2-oxobutanoate: step 2/4. The protein operates within amino-acid biosynthesis; L-valine biosynthesis; L-valine from pyruvate: step 2/4. Functionally, involved in the biosynthesis of branched-chain amino acids (BCAA). Catalyzes an alkyl-migration followed by a ketol-acid reduction of (S)-2-acetolactate (S2AL) to yield (R)-2,3-dihydroxy-isovalerate. In the isomerase reaction, S2AL is rearranged via a Mg-dependent methyl migration to produce 3-hydroxy-3-methyl-2-ketobutyrate (HMKB). In the reductase reaction, this 2-ketoacid undergoes a metal-dependent reduction by NADPH to yield (R)-2,3-dihydroxy-isovalerate. The polypeptide is Ketol-acid reductoisomerase (NADP(+)) (Rhizorhabdus wittichii (strain DSM 6014 / CCUG 31198 / JCM 15750 / NBRC 105917 / EY 4224 / RW1) (Sphingomonas wittichii)).